The primary structure comprises 1309 residues: Phospholipase A I (1309 aa).

LRR repeat units follow at residues 155-178, 180-201, 203-223, and 224-248; these read LPLL…IGKL, NLKI…LRQC, GLVE…DFRA, and MAGL…PLHQ. 3 ARM repeats span residues 315–356, 401–439, and 440–481; these read DEGN…SLAR, SVSQ…NLAF, and CLEN…ILGE. The region spanning 502 to 746 is the PNPLA domain; the sequence is LTMDGGGMKG…VANNPTIFAI (245 aa). A GXGXXG motif is present at residues 506-511; sequence GGGMKG. The GXSXG signature appears at 538 to 542; it reads GTSTG. The active-site Nucleophile is Ser-540. Asp-733 (proton acceptor) is an active-site residue. Residues 733–735 carry the DGA/G motif; sequence DGA. Residues 1183 to 1253 are disordered; sequence VIGPSNEPQE…EDSDHEKTNR (71 aa). Over residues 1188 to 1208 the composition is skewed to polar residues; the sequence is NEPQETPLITSQGSSEYNIGD. Residues 1216 to 1235 show a composition bias toward acidic residues; it reads GEEEDEDEEVNEETEREEME.

This sequence belongs to the patatin family.

It is found in the plastid. The protein localises to the chloroplast. Its function is as follows. Possesses non-specific lipolytic acyl hydrolase (LAH) activity. Catalyzes the hydrolysis of the galactolipids monogalactosyldiacylglycerol (MGDG) and digalactosyldiacylglycerol (DGDG), and less efficiently the phoshpolipids phosphatidylcholine (PC), phosphatidylethanolamine (PE), phosphatidylglycerol (PG), phosphatidylserine (PS) and phosphatidylinositol (PI). Hydrolyzes phospholipids at both the sn-1 and sn-2 positions. Involved in basal jasmonic acid production and promotes resistance to the necrotrophic fungal pathogen Botrytis cinerea. This is Phospholipase A I (PLA1) from Arabidopsis thaliana (Mouse-ear cress).